Here is a 354-residue protein sequence, read N- to C-terminus: Probable L-ascorbate-6-phosphate lactonase UlaG (354 aa).

Belongs to the UlaG family. A divalent metal cation serves as cofactor.

It is found in the cytoplasm. It carries out the reaction L-ascorbate 6-phosphate + H2O = 3-dehydro-L-gulonate 6-phosphate. It participates in cofactor degradation; L-ascorbate degradation; D-xylulose 5-phosphate from L-ascorbate: step 1/4. Its function is as follows. Probably catalyzes the hydrolysis of L-ascorbate-6-P into 3-keto-L-gulonate-6-P. Is essential for L-ascorbate utilization under anaerobic conditions. The sequence is that of Probable L-ascorbate-6-phosphate lactonase UlaG from Escherichia coli O127:H6 (strain E2348/69 / EPEC).